Consider the following 142-residue polypeptide: Large ribosomal subunit protein uL13 (142 aa).

Belongs to the universal ribosomal protein uL13 family. Part of the 50S ribosomal subunit.

Its function is as follows. This protein is one of the early assembly proteins of the 50S ribosomal subunit, although it is not seen to bind rRNA by itself. It is important during the early stages of 50S assembly. This chain is Large ribosomal subunit protein uL13, found in Acholeplasma laidlawii (strain PG-8A).